The following is a 32-amino-acid chain: Kappa-theraphotoxin-Gr2b (32 aa).

3 cysteine pairs are disulfide-bonded: C2/C16, C9/C21, and C15/C25.

It belongs to the neurotoxin 30 (phrixotoxin) family. As to expression, expressed by the venom gland.

The protein localises to the secreted. Binds the voltage-sensor domain of the potassium channel KvAP (from the archaeon Aeropyrum pernix) and affects channel gating. This chain is Kappa-theraphotoxin-Gr2b, found in Grammostola rosea (Chilean rose tarantula).